A 572-amino-acid polypeptide reads, in one-letter code: Sorting nexin 2B (572 aa).

Disordered regions lie at residues 1–97 and 114–136; these read MMGS…SSYL and SEIN…SPSS. A compositionally biased stretch (basic and acidic residues) spans 9–30; sequence ESHLHSSKEEMEKLFLREDGDP. Residues 32-53 show a composition bias toward polar residues; that stretch reads TKSNVNGDKSNSNYRSAMSTLF. The span at 124 to 136 shows a compositional bias: low complexity; the sequence is SQSSDSLSRSPSS. Position 133 is a phosphoserine (Ser-133). The 120-residue stretch at 147-266 folds into the PX domain; it reads SNPQKEQEAT…KVFLQAQGKL (120 aa). 3 residues coordinate a 1,2-diacyl-sn-glycero-3-phospho-(1D-myo-inositol-3-phosphate): Arg-190, Lys-216, and Arg-233. The region spanning 318–572 is the BAR domain; it reads LRQSVSNDWG…ETRQYDRESS (255 aa).

It belongs to the sorting nexin family. As to quaternary structure, homodimer. Heterodimer with SNX1 or SNX2B. Component of the retromer complex which consists of VPS29 (MAG1), VPS26 (VPS26A or VPS26B), VPS35 (VPS35A or VPS35B or VPS35C), VPS5/17 (SNX1 or SNX2A or SNX2B). In terms of tissue distribution, ubiquitously expressed.

It localises to the cytoplasm. Its subcellular location is the endosome membrane. It is found in the prevacuolar compartment membrane. The protein localises to the golgi apparatus. The protein resides in the trans-Golgi network membrane. Plays a role in vesicular protein sorting. Acts at the crossroads between the secretory and endocytic pathways. Is involved in the endosome to vacuole protein transport and, as component of the membrane-associated retromer complex, is also involved in endosome-to-Golgi retrograde transport. This Arabidopsis thaliana (Mouse-ear cress) protein is Sorting nexin 2B (SNX2B).